The chain runs to 520 residues: Acetylcholine receptor subunit delta (520 aa).

Residues 1–24 (MAGPVLTLGLLAALVVCALPGSWG) form the signal peptide. At 25–248 (LNEEQRLIQH…VTFYLIIRRK (224 aa)) the chain is on the extracellular side. N-linked (GlcNAc...) asparagine glycosylation is found at Asn100, Asn167, and Asn193. Residues Cys154 and Cys168 are joined by a disulfide bond. A run of 3 helical transmembrane segments spans residues 249–273 (PLFYIINILVPCVLISFMINLVFYL), 281–299 (TSVAISVLLAQSVFLLLIS), and 315–336 (FLLFGMVLVTMVVVICVIVLNI). The Cytoplasmic portion of the chain corresponds to 337 to 474 (HFRTPSTHVL…WNQVARTVDR (138 aa)). Tyr393 bears the Phosphotyrosine; by Tyr-kinases mark. The chain crosses the membrane as a helical span at residues 475–493 (LCLFVVTPVMVVGTAWIFL).

Belongs to the ligand-gated ion channel (TC 1.A.9) family. Acetylcholine receptor (TC 1.A.9.1) subfamily. Delta/CHRND sub-subfamily. In terms of assembly, pentamer of two alpha chains, and one each of the beta, delta, and gamma (in immature muscle) or epsilon (in mature muscle) chains. The muscle heteropentamer composed of alpha-1, beta-1, delta, epsilon subunits interacts with the alpha-conotoxin ImII.

The protein resides in the postsynaptic cell membrane. It is found in the cell membrane. The enzyme catalyses K(+)(in) = K(+)(out). It catalyses the reaction Na(+)(in) = Na(+)(out). In terms of biological role, after binding acetylcholine, the AChR responds by an extensive change in conformation that affects all subunits and leads to opening of an ion-conducting channel across the plasma membrane. The protein is Acetylcholine receptor subunit delta (Chrnd) of Mus musculus (Mouse).